An 819-amino-acid polypeptide reads, in one-letter code: Meiotically up-regulated gene 45 protein (819 aa).

Residues 797–817 (AMCLLTLLIGIYLILQVVFIY) form a helical membrane-spanning segment.

The protein localises to the membrane. Its function is as follows. Has a role in meiosis. The chain is Meiotically up-regulated gene 45 protein (mug45) from Schizosaccharomyces pombe (strain 972 / ATCC 24843) (Fission yeast).